The sequence spans 293 residues: uncharacterized protein (293 aa).

The HTH lysR-type domain maps to 1 to 58 (MELKQLITFITAAEHVNFTLTAKMLNYAQSSVTSQIKSLEEEIGTPLFERLGKRLILT). Positions 18–37 (FTLTAKMLNYAQSSVTSQIK) form a DNA-binding region, H-T-H motif.

This sequence belongs to the LysR transcriptional regulatory family.

It localises to the cytoplasm. This is an uncharacterized protein from Bacillus subtilis (strain 168).